The chain runs to 137 residues: Protein PsiE homolog (137 aa).

The next 4 membrane-spanning stretches (helical) occupy residues 15–35, 55–75, 82–102, and 108–128; these read LRIT…AFLI, YYMT…ALIV, FHFP…RFII, and ATST…LFLA.

This sequence belongs to the PsiE family.

The protein localises to the cell membrane. This chain is Protein PsiE homolog, found in Listeria innocua serovar 6a (strain ATCC BAA-680 / CLIP 11262).